A 159-amino-acid polypeptide reads, in one-letter code: Transcription elongation factor GreA (159 aa).

The stretch at 43 to 75 (LSENAEYDAAREEQSQLEAKIGEIENKLASATI) forms a coiled coil.

This sequence belongs to the GreA/GreB family.

Functionally, necessary for efficient RNA polymerase transcription elongation past template-encoded arresting sites. The arresting sites in DNA have the property of trapping a certain fraction of elongating RNA polymerases that pass through, resulting in locked ternary complexes. Cleavage of the nascent transcript by cleavage factors such as GreA or GreB allows the resumption of elongation from the new 3'terminus. GreA releases sequences of 2 to 3 nucleotides. The sequence is that of Transcription elongation factor GreA from Chlorobaculum tepidum (strain ATCC 49652 / DSM 12025 / NBRC 103806 / TLS) (Chlorobium tepidum).